We begin with the raw amino-acid sequence, 335 residues long: L-lactate dehydrogenase B chain (335 aa).

NAD(+)-binding positions include 29-57 (GQVG…VEDK) and Arg99. 3 residues coordinate substrate: Arg106, Asn138, and Arg169. An NAD(+)-binding site is contributed by Asn138. Residue His193 is the Proton acceptor of the active site. Thr248 contacts substrate.

Belongs to the LDH/MDH superfamily. LDH family. As to quaternary structure, homotetramer.

It localises to the cytoplasm. It catalyses the reaction (S)-lactate + NAD(+) = pyruvate + NADH + H(+). It functions in the pathway fermentation; pyruvate fermentation to lactate; (S)-lactate from pyruvate: step 1/1. Interconverts simultaneously and stereospecifically pyruvate and lactate with concomitant interconversion of NADH and NAD(+). The chain is L-lactate dehydrogenase B chain (LDHB) from Sceloporus undulatus (Eastern fence lizard).